The primary structure comprises 448 residues: 5-hydroxytryptamine receptor 7 (448 aa).

Over 1-86 the chain is Extracellular; it reads MMDVNSSGRP…INYGRVEKVV (86 aa). N-linked (GlcNAc...) asparagine glycans are attached at residues Asn-5 and Asn-69. Residues 87–111 traverse the membrane as a helical segment; sequence IGSILTLITLLTIAGNCLVVISVCF. At 112–121 the chain is on the cytoplasmic side; it reads VKKLRQPSNY. The helical transmembrane segment at 122–143 threads the bilayer; sequence LIVSLALADLSVAVAVMPFVSV. At 144–155 the chain is on the extracellular side; the sequence is TDLIGGKWIFGH. Residues 156-181 traverse the membrane as a helical segment; that stretch reads FFCNVFIAMDVMCCTASIMTLCVISI. Cysteines 158 and 234 form a disulfide. Asp-165 serves as a coordination point for serotonin. Topologically, residues 182–201 are cytoplasmic; it reads DRYLGITRPLTYPVRQNGKC. Residues 202 to 222 traverse the membrane as a helical segment; that stretch reads MAKMILSVWLLSASITLPPLF. The Extracellular portion of the chain corresponds to 223–240; that stretch reads GWAQNVNDDKVCLISQDF. The helical transmembrane segment at 241–263 threads the bilayer; that stretch reads GYTIYSTAVAFYIPMSVMLFMYY. The Cytoplasmic portion of the chain corresponds to 264-329; the sequence is QIYKAARKSA…SIFKREQKAA (66 aa). The chain crosses the membrane as a helical span at residues 330–355; that stretch reads TTLGIIVGAFTVCWLPFFLLSTARPF. Residues 356 to 366 lie on the Extracellular side of the membrane; that stretch reads ICGTSCSCIPL. The chain crosses the membrane as a helical span at residues 367–390; sequence WVERTCLWLGYANSLINPFIYAFF. Residues 391-448 lie on the Cytoplasmic side of the membrane; sequence NRDLRTTYRSLLQCQYRNINRKLSAAGMHEALKLAERPERSEFVLQNSDHCGKKGHDT. Residue Cys-404 is the site of S-palmitoyl cysteine attachment.

The protein belongs to the G-protein coupled receptor 1 family. In terms of tissue distribution, thalamus, hypothalamus, and the hippocampal rudiments.

It is found in the cell membrane. Functionally, G-protein coupled receptor for 5-hydroxytryptamine (serotonin), a biogenic hormone that functions as a neurotransmitter, a hormone and a mitogen. Ligand binding causes a conformation change that triggers signaling via guanine nucleotide-binding proteins (G proteins) and modulates the activity of downstream effectors. HTR7 is coupled to G(s) G alpha proteins and mediates activation of adenylate cyclase activity. This chain is 5-hydroxytryptamine receptor 7, found in Rattus norvegicus (Rat).